The chain runs to 232 residues: DOA4-independent degradation protein 4 (232 aa).

Residues 14-97 (PQERLKKNQR…AISLRIQAVR (84 aa)) adopt a coiled-coil conformation. An interaction with VPS4 region spans residues 183-232 (LQSTPQNLVSNAPIAETAMGIPEPIGAGSEFHGNPDDDLQARLNTLKKQT). Positions 203–232 (IPEPIGAGSEFHGNPDDDLQARLNTLKKQT) are disordered. Residues 219-229 (DDLQARLNTLK) carry the MIT-interacting motif motif.

This sequence belongs to the SNF7 family. In terms of assembly, core component of the ESCRT-III complex (endosomal sorting required for transport complex III). ESCRT-III appears to be sequentially assembled as a flat lattice on the endosome membrane and forms a transient 450 kDa complex that contains DID4, oligomerized SNF7, VPS20 and VPS24. SNF7 oligomerization into a membrane-associated filament is nucleated by association of SNF7 with VPS20; the process is terminated through association of VPS24, possibly by capping the SNF7 filament. VPS24 subsequently associates with DID4/VPS2.

It is found in the cytoplasm. Its subcellular location is the endosome membrane. Required for the sorting and concentration of proteins resulting in the entry of these proteins into the invaginating vesicles of the multivesicular body (MVB). Acts a component of the ESCRT-III complex, which appears to be critical for late steps in MVB sorting, such as membrane invagination and final cargo sorting and recruitment of late-acting components of the sorting machinery. The MVB pathway requires the sequential function of ESCRT-O, -I,-II and -III complex assemblies. Can directly stimulate VPS4 ATPase activity. The DID4/VPS2-VPS24 subcomplex is required for the VPS4-dependent dissociation of ESCRT-III. This chain is DOA4-independent degradation protein 4 (DID4), found in Saccharomyces cerevisiae (strain ATCC 204508 / S288c) (Baker's yeast).